The chain runs to 190 residues: dCTP deaminase (190 aa).

113-118 (KSTYAR) serves as a coordination point for dCTP. Glu-139 acts as the Proton donor/acceptor in catalysis. Residues Gln-158, Tyr-172, Lys-181, and Gln-182 each coordinate dCTP.

The protein belongs to the dCTP deaminase family. As to quaternary structure, homotrimer.

It carries out the reaction dCTP + H2O + H(+) = dUTP + NH4(+). It participates in pyrimidine metabolism; dUMP biosynthesis; dUMP from dCTP (dUTP route): step 1/2. In terms of biological role, catalyzes the deamination of dCTP to dUTP. This is dCTP deaminase from Chlamydia pneumoniae (Chlamydophila pneumoniae).